The sequence spans 180 residues: Cell division protein ZapC (180 aa).

The protein belongs to the ZapC family. In terms of assembly, interacts directly with FtsZ.

It localises to the cytoplasm. Functionally, contributes to the efficiency of the cell division process by stabilizing the polymeric form of the cell division protein FtsZ. Acts by promoting interactions between FtsZ protofilaments and suppressing the GTPase activity of FtsZ. This is Cell division protein ZapC from Vibrio vulnificus (strain CMCP6).